A 757-amino-acid chain; its full sequence is MDVNPTLLFLKVPAQNAISTTFPYTGDPPYSHGTGTGYTMDTVNRTHQYSERGKWTTNTETGAPQLNPIDGPLPEDNEPSGYAQTDCVLEAMAFLEESHPGIFENSCLETMEVIQQTRVDKLTQGRQTYDWTLNRNQPAATALANTIEVFRSNGLTANESGRLIDFLKDVIESMDKEEMEIITHFQRKRRVRDNMTKKMVTQRTIGKKKQRLNKRSYLIRALTLNTMTKDAERGKLKRRAIATPGMQIRGFVYFVETLARNICEKLEQSGLPVGGNEKKAKLANVVRKMMTNSQDTELSFTITGDNTKWNENQNPRMFLAMITYITRNQPEWFRNVLSIAPIMFSNKMARLGKGYMFESKSMKLRTQIPAEMLASIDLKYFNESTRKKIEKIRPLLIDGTASLSPGMMMGMFNMLSTVLGVSILNLGQKKYTKTTYWWDGLQSSDDFALIVNAPSHEGIQAGVNRFYRTCKLVGINMSKKKSYINRTGTFEFTSFFYRYGFVANFSMELPSFGVSGINESADMSIGVTVIKNNMINNDLGPATAQMALQLFIKDYRYTYRCHRGDTQIQTRRSFELKKLWEQTRSKAGLLVSDGGSNLYNIRNLHIPEVCLKWELMDEDYQGRLCNPLNPFVSHKEIESVNNAVVMPAHGPAKSMEYDAVATTHSWTPKRNRSILNTSQRGILEDEQMYQKCCNLFEKFFPSSSYRRPVGISSMVEAMVSRARIDARIDFESGRIKKEEFAEIMKICSTIEELRRQK.

Residues 52 to 82 form a disordered region; sequence RGKWTTNTETGAPQLNPIDGPLPEDNEPSGY. A compositionally biased stretch (polar residues) spans 55–64; it reads WTTNTETGAP. Short sequence motifs (nuclear localization signal) lie at residues 187 to 195 and 203 to 216; these read RKRRVRDNM and RTIG…NKRS. Residues 249-256 are promoter-binding site; it reads RGFVYFVE. A RdRp catalytic domain is found at 286–483; sequence VRKMMTNSQD…GINMSKKKSY (198 aa).

This sequence belongs to the influenza viruses polymerase PB1 family. As to quaternary structure, influenza RNA polymerase is composed of three subunits: PB1, PB2 and PA. Interacts (via N-terminus) with PA (via C-terminus). Interacts (via C-terminus) with PB2 (via N-terminus); this interaction is essential for transcription initiation. Phosphorylated by host PRKCA.

The protein localises to the host nucleus. It localises to the host cytoplasm. The enzyme catalyses RNA(n) + a ribonucleoside 5'-triphosphate = RNA(n+1) + diphosphate. Its function is as follows. RNA-dependent RNA polymerase which is responsible for replication and transcription of virus RNA segments. The transcription of viral mRNAs occurs by a unique mechanism called cap-snatching. 5' methylated caps of cellular mRNAs are cleaved after 10-13 nucleotides by PA. In turn, these short capped RNAs are used as primers by PB1 for transcription of viral mRNAs. During virus replication, PB1 initiates RNA synthesis and copy vRNA into complementary RNA (cRNA) which in turn serves as a template for the production of more vRNAs. The protein is RNA-directed RNA polymerase catalytic subunit of Aves (Human).